A 618-amino-acid polypeptide reads, in one-letter code: D-glucuronyl C5-epimerase (618 aa).

At 1 to 11 (MRCLAARVNYK) the chain is on the cytoplasmic side. Residues 12–29 (TLIIICALFTLVTVLLWN) form a helical; Signal-anchor for type II membrane protein membrane-spanning segment. Over 30-618 (KCSSDKAIQF…YLKGSRAKHN (589 aa)) the chain is Lumenal. Substrate is bound by residues Tyr-180, 185 to 187 (RDR), Gln-202, Tyr-210, Gln-213, and Gln-216. Ca(2+) contacts are provided by Thr-238, Glu-240, Thr-269, Asn-270, and Asp-393. Residues 430–433 (KLGE), 500–501 (EY), Asn-511, Tyr-515, Tyr-561, Arg-564, and 573–582 (NLARWDYHTT) each bind substrate.

This sequence belongs to the D-glucuronyl C5-epimerase family. As to quaternary structure, homodimer. Interacts with HS2ST1. As to expression, widely expressed with highest levels in lung and lowest levels in spleen.

It localises to the golgi apparatus membrane. The enzyme catalyses [heparosan-N-sulfate](n) = [heparan-N-sulfate](n). It functions in the pathway glycan metabolism; heparan sulfate biosynthesis. Its pathway is glycan metabolism; heparin biosynthesis. Converts D-glucuronic acid residues adjacent to N-sulfate sugar residues to L-iduronic acid residues, both in maturing heparan sulfate (HS) and heparin chains. This is important for further modifications that determine the specificity of interactions between these glycosaminoglycans and proteins. In Mus musculus (Mouse), this protein is D-glucuronyl C5-epimerase (Glce).